A 201-amino-acid polypeptide reads, in one-letter code: Recombination protein RecR (201 aa).

The segment at 57-72 adopts a C4-type zinc-finger fold; the sequence is CTHCRTFTEEESCAIC. The 96-residue stretch at 81-176 folds into the Toprim domain; it reads GFLCVVEQPS…KVSRIAHGIP (96 aa).

Belongs to the RecR family.

Its function is as follows. May play a role in DNA repair. It seems to be involved in an RecBC-independent recombinational process of DNA repair. It may act with RecF and RecO. The polypeptide is Recombination protein RecR (Histophilus somni (strain 129Pt) (Haemophilus somnus)).